A 147-amino-acid polypeptide reads, in one-letter code: MTRDQVTQLVLDSKRRKQLKWAQLAEATGQSKEWTAAALLGQMTLSAAQAGAVGRLLDLPADAVDGLQVVPYKGSLPTAVPTDPLIYRFYELINVYGTSIKELIHEEFGDGIMSAIDFSMDISREADPKGDRVRIVLNGKFLPYRMY.

Catalysis depends on residues Arg88, Glu91, and Ser114.

The protein belongs to the cyanase family.

It catalyses the reaction cyanate + hydrogencarbonate + 3 H(+) = NH4(+) + 2 CO2. In terms of biological role, catalyzes the reaction of cyanate with bicarbonate to produce ammonia and carbon dioxide. The protein is Cyanate hydratase of Thiobacillus denitrificans (strain ATCC 25259 / T1).